The primary structure comprises 340 residues: NAD-dependent epimerase/dehydratase terH (340 aa).

The helical transmembrane segment at 7–27 (IVPPGGLVLVTGVTGFIGSYI) threads the bilayer. An N-linked (GlcNAc...) asparagine glycan is attached at Asn139. An NADP(+)-binding site is contributed by Tyr176.

This sequence belongs to the NAD(P)-dependent epimerase/dehydratase family. Dihydroflavonol-4-reductase subfamily.

The protein localises to the membrane. In terms of biological role, NAD-dependent epimerase/dehydratase; part of the gene cluster that mediates the biosynthesis of terrein, a fungal metabolite with ecological, antimicrobial, antiproliferative, and antioxidative activities. The first step in the pathway is performed by the polyketide synthase terA that produces 4-hydroxy-6-methylpyranon (4-HMP), orsellinic acid (OA), and 2,3-dehydro-6-hydroxymellein (2,3-dehydro-6-HM) by condensing acetyl-CoA with two, three, or four malonyl-CoA units, respectively. 4-HMP and OA are not pathway intermediates, but are rather shunt or side products. 2,3-dehydro-6-HM is further converted to 6-hydroxymellein (6-HM) by the 6-hydroxymellein synthase terB. The monooxygenases terC and terD, the multicopper oxidase terE and the Kelch-like protein terF are then involved in the transformation of 6-HM to terrein. Even if they are co-regulated with the other terrein cluster genes, terH and terI seem to be dispensable for terrein production; whereas one or both of the 2 transporters terG and terJ are probably required for efficient secretion of metabolites. In Aspergillus terreus (strain NIH 2624 / FGSC A1156), this protein is NAD-dependent epimerase/dehydratase terH.